The chain runs to 1460 residues: CLIP-associating protein 1-A (1460 aa).

HEAT repeat units lie at residues 87–124 (TQLG…QASN) and 163–200 (LTLS…HVGE). Residues 237–293 (SDKNFDDEDSVDGNRPSSASSSASSKAPQTARRGVSLGTARRPGPSSAAAKTGGTAK) are disordered. Over residues 279 to 293 (PGPSSAAAKTGGTAK) the composition is skewed to low complexity. HEAT repeat units follow at residues 407–442 (HGAE…IRHT) and 443–479 (HVPR…EWQT). Disordered regions lie at residues 545–605 (SDSI…IDVN), 640–733 (IRTR…RFGI), and 778–800 (PYGM…ERSY). A compositionally biased stretch (low complexity) spans 550 to 569 (SLPQSDRSSSSSQESLNRPL). Polar residues predominate over residues 571 to 597 (TKRSPTGSTVSRASSTTSKSTPGSLQR). The span at 645–659 (QSSGSTTSTASTPAD) shows a compositional bias: low complexity. Composition is skewed to polar residues over residues 669-681 (VSQS…SNSP) and 715-724 (QGCSRETSPS). Positions 789–800 (SDASSACSERSY) are enriched in low complexity. The stretch at 942–979 (FIVDQTQTPNLKVKVAILKYIESLARQMDPTDFVNSSE) is one HEAT 5 repeat. The segment at 1041–1084 (LKNSSNSSMGSPSNTIGRTPSRHSSSRASPLTSPTNCSHGGLSP) is disordered. A compositionally biased stretch (low complexity) spans 1042 to 1054 (KNSSNSSMGSPSN). The span at 1066-1078 (SRASPLTSPTNCS) shows a compositional bias: polar residues. HEAT repeat units lie at residues 1272-1309 (LLLE…YAEL) and 1390-1427 (GLLQ…YLAQ).

It belongs to the CLASP family.

Its subcellular location is the cytoplasm. The protein resides in the cytoskeleton. It is found in the microtubule organizing center. It localises to the centrosome. The protein localises to the chromosome. Its subcellular location is the centromere. The protein resides in the kinetochore. It is found in the spindle. It localises to the golgi apparatus. The protein localises to the trans-Golgi network. In terms of biological role, microtubule plus-end tracking protein that promotes the stabilization of dynamic microtubules during anaphase. Plays a crucial role in chromatin-induced microtubule formation. May also act at microtubule minus ends. May be involved in the nucleation of noncentrosomal microtubules originating from the trans-Golgi network (TGN). This chain is CLIP-associating protein 1-A (clasp1-a), found in Xenopus laevis (African clawed frog).